The primary structure comprises 487 residues: Bifunctional protein HldE (487 aa).

The interval 1–326 (MERREVESFF…QEIVAEVGHG (326 aa)) is ribokinase. Residue 205-208 (NRKE) coordinates ATP. The active site involves Asp-275. Positions 356–487 (FTNGCFDLLH…RIIEKILSSY (132 aa)) are cytidylyltransferase.

This sequence in the N-terminal section; belongs to the carbohydrate kinase PfkB family. The protein in the C-terminal section; belongs to the cytidylyltransferase family. In terms of assembly, homodimer.

The catalysed reaction is D-glycero-beta-D-manno-heptose 7-phosphate + ATP = D-glycero-beta-D-manno-heptose 1,7-bisphosphate + ADP + H(+). It carries out the reaction D-glycero-beta-D-manno-heptose 1-phosphate + ATP + H(+) = ADP-D-glycero-beta-D-manno-heptose + diphosphate. The protein operates within nucleotide-sugar biosynthesis; ADP-L-glycero-beta-D-manno-heptose biosynthesis; ADP-L-glycero-beta-D-manno-heptose from D-glycero-beta-D-manno-heptose 7-phosphate: step 1/4. Its pathway is nucleotide-sugar biosynthesis; ADP-L-glycero-beta-D-manno-heptose biosynthesis; ADP-L-glycero-beta-D-manno-heptose from D-glycero-beta-D-manno-heptose 7-phosphate: step 3/4. Its function is as follows. Catalyzes the phosphorylation of D-glycero-D-manno-heptose 7-phosphate at the C-1 position to selectively form D-glycero-beta-D-manno-heptose-1,7-bisphosphate. Functionally, catalyzes the ADP transfer from ATP to D-glycero-beta-D-manno-heptose 1-phosphate, yielding ADP-D-glycero-beta-D-manno-heptose. This is Bifunctional protein HldE from Citrifermentans bemidjiense (strain ATCC BAA-1014 / DSM 16622 / JCM 12645 / Bem) (Geobacter bemidjiensis).